The sequence spans 247 residues: Carboxy-S-adenosyl-L-methionine synthase (247 aa).

Residues Tyr39, 64–66 (GCS), 89–90 (DN), 117–118 (DI), Asn132, and Arg199 each bind S-adenosyl-L-methionine.

This sequence belongs to the class I-like SAM-binding methyltransferase superfamily. Cx-SAM synthase family. In terms of assembly, homodimer.

The enzyme catalyses prephenate + S-adenosyl-L-methionine = carboxy-S-adenosyl-L-methionine + 3-phenylpyruvate + H2O. Functionally, catalyzes the conversion of S-adenosyl-L-methionine (SAM) to carboxy-S-adenosyl-L-methionine (Cx-SAM). This Klebsiella pneumoniae (strain 342) protein is Carboxy-S-adenosyl-L-methionine synthase.